A 323-amino-acid polypeptide reads, in one-letter code: Mitochondrial glutamate carrier 1 (323 aa).

Solcar repeat units follow at residues 6–93 (ISLP…FRHQ), 101–214 (LTLL…LNQL), and 223–312 (SPFY…GIAE). Transmembrane regions (helical) follow at residues 12 to 32 (LINGGIAGLIGVTCVFPIDLA), 62 to 82 (YFGMYRGAAVNLTLVTPEKAI), 107 to 127 (MLAGCGAGTCQVIVTTPMEML), 189 to 209 (GLGATLLRDVPFSVVYFPLFA), 223 to 243 (SPFYVSFLAGCVAGSAAAVAV), and 292 to 312 (ALVIAPLFGIAQVVYFLGIAE).

It belongs to the mitochondrial carrier (TC 2.A.29) family. In terms of tissue distribution, expressed at high levels in brain, liver, and pancreas.

The protein resides in the mitochondrion inner membrane. It catalyses the reaction L-glutamate(in) + H(+)(in) = L-glutamate(out) + H(+)(out). Its function is as follows. Mitochondrial glutamate/H(+) symporter. Responsible for the transport of glutamate from the cytosol into the mitochondrial matrix with the concomitant import of a proton. Plays a role in the control of glucose-stimulated insulin secretion. The chain is Mitochondrial glutamate carrier 1 from Homo sapiens (Human).